The sequence spans 313 residues: MAINKAVSIDTAFQTIMQELRERSARFLGTKQAVSEEKAEFDCPYCKDRGIVVYRVHKDTSWHLDEQLDLMVPDDMVSEDDFLLGKVCTPDKASEWKDTYSKQCECVRRKKIARLMAASGITEEFEKLLFGNFITDGKPDMIKDAYECAVEYYKDFQKIKGERQNSIALLGQPGSGKTHLLTAIMNNLIKKKSVHCMYFPYVEGMGDLKANFDNLEAKLDAMRKVEVLFIDDLFKPINGQPRATDWQVEQIQSVLNYRYLNHKPLLISSELTIDEILDIDEALGSRIHQMCRDYIVIIRGDRMQLNHRLGDWE.

This sequence to B.subtilis YqxC and T.hyodysenteriae hemolysin TlyA.

This is an uncharacterized protein from Bacillus subtilis (strain 168).